The primary structure comprises 265 residues: MSRLSRVFFDSPKNHKVFIPFITAGDSGLDNTFELMQVLVKNGADVIELGVPFSDPMADGPVISRSYERTVKDGVSLSDVFTVVKKFRQTNNTTAIVLMGYLNPIEVFGYQPFANAASESGVDGVLVVDMPPEEAYGLKQILDGVGINFIFLVAPTTMDERLVFLATIASGFIYFVSLKGVTGAEYLDINLVKTHILRIRQVIDLPIGVGFGIKDAISAKIVSEYADAVIVGSSLVGLVERYANDRTKMLAKVGYLANEISTIIK.

Residues Glu-48 and Asp-59 each act as proton acceptor in the active site.

It belongs to the TrpA family. In terms of assembly, tetramer of two alpha and two beta chains.

The enzyme catalyses (1S,2R)-1-C-(indol-3-yl)glycerol 3-phosphate + L-serine = D-glyceraldehyde 3-phosphate + L-tryptophan + H2O. The protein operates within amino-acid biosynthesis; L-tryptophan biosynthesis; L-tryptophan from chorismate: step 5/5. Functionally, the alpha subunit is responsible for the aldol cleavage of indoleglycerol phosphate to indole and glyceraldehyde 3-phosphate. This Vesicomyosocius okutanii subsp. Calyptogena okutanii (strain HA) protein is Tryptophan synthase alpha chain.